The primary structure comprises 692 residues: uncharacterized protein (692 aa).

2 Response regulatory domains span residues 9 to 130 (RVLY…LRMC) and 139 to 255 (RILI…EYRM). A 4-aspartylphosphate mark is found at Asp58 and Asp188. The GGDEF domain maps to 299–432 (GVHGLVIIDV…GGNQAHVWSA (134 aa)). The region spanning 443-691 (ESVIKRLVST…SFDFQHMSHD (249 aa)) is the EAL domain.

This is an uncharacterized protein from Thiocystis violacea.